Here is a 564-residue protein sequence, read N- to C-terminus: Hsp70-Hsp90 organising protein (564 aa).

3 TPR repeats span residues 7 to 40 (AQRL…DPLD), 42 to 74 (VLYS…KKDW), and 76 to 108 (KGYI…DPNN). Positions 197 to 239 (EGNDAEERQRQQREEEERRKKKEEEERKKKEEEEMKKQNRTPE) form a coiled coil. The segment at 199-247 (NDAEERQRQQREEEERRKKKEEEERKKKEEEEMKKQNRTPEQIQGDEHK) is disordered. The span at 201–233 (AEERQRQQREEEERRKKKEEEERKKKEEEEMKK) shows a compositional bias: basic and acidic residues. TPR repeat units follow at residues 243-276 (GDEH…NPND), 278-310 (MYHY…RYNF), 318-351 (AKLY…DNNR), 378-411 (AEEH…NPND), 413-445 (KLYS…DPTF), and 446-479 (VKAY…DPNN). The 40-residue stretch at 513 to 552 (DPEIQQIISDPQFQIILQKLNENPNSISEYIKDPKIFNGL) folds into the STI1 domain.

In terms of assembly, monomer. Homodimer. Forms a complex composed of HOP and chaperones HSP70 and HSP90; the interaction is stronger in the absence of ATP. Interacts (via TPR 1, 2, 3, 7, 8 and 9 repeats) with HSP70 (via C-terminus); the interaction is direct and is stronger in the absence of ATP. Interacts (via TPR 4, 5 and 6 repeats) with HSP90 (via C-terminus); the interaction is direct.

Its subcellular location is the cytoplasm. Its function is as follows. Acts as a co-chaperone and mediates the association of the chaperones HSP70 and HSP90 probably facilitating substrate transfer from HSP70 to HSP90. Stimulates HSP70 ATPase activity and, in contrast, inhibits HSP90 ATPase activity. The sequence is that of Hsp70-Hsp90 organising protein from Plasmodium falciparum (isolate 3D7).